Here is a 215-residue protein sequence, read N- to C-terminus: MTSSMYNYIEQTWQSDEWKKVLRQRLIEWRKSPAVERIDKPTRLNRARAIGYKAKQGFVVVRVRVRRGGLNKPRPNSGRRPKRMGVYGYSPAKGYRWIAEEKAARKFPNLEVLGSYYVGEDGMYKYYEIIMVDPNHPVIKSDPNLKWLQDPANRKRVFRGLTSAGKKARGLLKSRGLKGTVKHKWKKKEKEREQKKRHEATKYYRLQNYDKLPGK.

The tract at residues 179-215 (GTVKHKWKKKEKEREQKKRHEATKYYRLQNYDKLPGK) is disordered. Residues 188–202 (KEKEREQKKRHEATK) are compositionally biased toward basic and acidic residues.

The protein belongs to the eukaryotic ribosomal protein eL15 family.

The polypeptide is Large ribosomal subunit protein eL15 (Sulfurisphaera tokodaii (strain DSM 16993 / JCM 10545 / NBRC 100140 / 7) (Sulfolobus tokodaii)).